Reading from the N-terminus, the 124-residue chain is Small ribosomal subunit protein uS13 (124 aa).

The segment at 95-124 is disordered; it reads GLPVRGQRTKTNARTRKGPKRTVAGKKKAR.

Belongs to the universal ribosomal protein uS13 family. Part of the 30S ribosomal subunit. Forms a loose heterodimer with protein S19. Forms two bridges to the 50S subunit in the 70S ribosome.

Located at the top of the head of the 30S subunit, it contacts several helices of the 16S rRNA. In the 70S ribosome it contacts the 23S rRNA (bridge B1a) and protein L5 of the 50S subunit (bridge B1b), connecting the 2 subunits; these bridges are implicated in subunit movement. Contacts the tRNAs in the A and P-sites. This Leifsonia xyli subsp. xyli (strain CTCB07) protein is Small ribosomal subunit protein uS13.